Consider the following 262-residue polypeptide: NADP-dependent mannitol dehydrogenase (262 aa).

NADP(+)-binding residues include Ile-23, Asp-69, Asn-96, and Arg-129. Ser-149 serves as the catalytic Proton donor. Residues Tyr-169, Lys-173, Val-202, Thr-204, and Gln-206 each coordinate NADP(+). Catalysis depends on Tyr-169, which acts as the Proton acceptor. Catalysis depends on Lys-173, which acts as the Lowers pKa of active site Tyr.

This sequence belongs to the short-chain dehydrogenases/reductases (SDR) family. In terms of assembly, homotetramer.

It carries out the reaction D-mannitol + NADP(+) = D-fructose + NADPH + H(+). In Agaricus bisporus (White button mushroom), this protein is NADP-dependent mannitol dehydrogenase (mtdH).